Consider the following 206-residue polypeptide: Protein phosphatase inhibitor 2 (206 aa).

The disordered stretch occupies residues 1-36 (MAASTASHRPIKGILKNKTSAASPPVVPSAEQPRPI). The residue at position 2 (A2) is an N-acetylalanine. The required for binding PPP1CC stretch occupies residues 12 to 17 (KGILKN). A required for binding the 'RVXF' binding groove of PPP1CC region spans residues 44 to 56 (KSQKWDEMNILAT). The residue at position 45 (S45) is a Phosphoserine; by ATM. T74 bears the Phosphothreonine mark. A disordered region spans residues 75 to 143 (PYHNMIGDDE…EREKKRQFEM (69 aa)). Over residues 81-92 (GDDEDAYSDSEG) the composition is skewed to acidic residues. 2 positions are modified to phosphoserine: S88 and S90. 2 positions are modified to phosphothreonine: T97 and T117. Positions 111–121 (SEPKYRTREQE) are enriched in basic and acidic residues. 3 positions are modified to phosphoserine: S122, S123, and S131. Positions 122-131 (SSGEEDNDLS) are enriched in acidic residues. Basic and acidic residues predominate over residues 132 to 143 (PEEREKKRQFEM). Residues 148–151 (HYNE) form a required for binding PPP1CC catalytic center, displacing metal ions and inhibition of PPP1CC catalytic activity region. Residues 164–206 (KDLHDDDEDEEMAETADGDSMNVEESSQGSTTSDHLQHKSQSS) are disordered. Over residues 168–180 (DDDEDEEMAETAD) the composition is skewed to acidic residues. A compositionally biased stretch (polar residues) spans 186 to 206 (VEESSQGSTTSDHLQHKSQSS).

This sequence belongs to the protein phosphatase inhibitor 2 family. As to quaternary structure, heterodimer with PP1. Phosphorylation on Ser-45 by ATM activates PP1 by dissociating the PP1-PPP1R2 complex. Phosphorylation on Thr-74 by GSK3 activates PP1 by dissociating the PP1-PPP1R2 complex.

Inhibitor of protein-phosphatase 1. In Mus musculus (Mouse), this protein is Protein phosphatase inhibitor 2 (Ppp1r2).